Consider the following 194-residue polypeptide: Thymidylate kinase (194 aa).

7 to 14 (GIDTAGKS) is a binding site for ATP.

This sequence belongs to the thymidylate kinase family.

The enzyme catalyses dTMP + ATP = dTDP + ADP. Its function is as follows. Phosphorylation of dTMP to form dTDP in both de novo and salvage pathways of dTTP synthesis. The protein is Thymidylate kinase of Nautilia profundicola (strain ATCC BAA-1463 / DSM 18972 / AmH).